The sequence spans 119 residues: Beta-2-microglobulin (119 aa).

Positions 1 to 20 (MARFVAVALLVLLSLSGLEA) are cleaved as a signal peptide. Positions 25–114 (PKIQVYSRHP…VTFSTPKTVK (90 aa)) constitute an Ig-like C1-type domain. A disulfide bridge links C45 with C100.

This sequence belongs to the beta-2-microglobulin family. As to quaternary structure, heterodimer of an alpha chain and a beta chain. Beta-2-microglobulin is the beta-chain of major histocompatibility complex class I molecules.

It localises to the secreted. Functionally, component of the class I major histocompatibility complex (MHC). Involved in the presentation of peptide antigens to the immune system. In Plecturocebus moloch (Dusky titi monkey), this protein is Beta-2-microglobulin (B2M).